The primary structure comprises 698 residues: Serotransferrin (698 aa).

The first 19 residues, 1–19 (MRLAVGALLVCAVLGLCLA), serve as a signal peptide directing secretion. 2 Transferrin-like domains span residues 25 to 347 (VRWC…NLRE) and 361 to 683 (VKWC…NLRK). 2 disulfide bridges follow: cysteine 28–cysteine 67 and cysteine 38–cysteine 58. The residue at position 42 (arginine 42) is a Dimethylated arginine. Serine 51 is a glycosylation site (O-linked (GalNAc...) serine). The Fe(3+) site is built by aspartate 82 and tyrosine 114. Cystine bridges form between cysteine 137/cysteine 213, cysteine 156/cysteine 350, cysteine 177/cysteine 193, cysteine 180/cysteine 198, cysteine 190/cysteine 196, cysteine 246/cysteine 260, cysteine 358/cysteine 615, cysteine 364/cysteine 396, cysteine 374/cysteine 387, cysteine 421/cysteine 693, cysteine 437/cysteine 656, cysteine 469/cysteine 542, cysteine 493/cysteine 684, cysteine 503/cysteine 517, cysteine 514/cysteine 525, cysteine 582/cysteine 596, and cysteine 634/cysteine 639. Residues threonine 139, arginine 143, alanine 145, and glycine 146 each contribute to the hydrogencarbonate site. A Fe(3+)-binding site is contributed by tyrosine 207. Histidine 268 serves as a coordination point for Fe(3+). Position 389 is a phosphoserine; by FAM20C (serine 389). Fe(3+) is bound at residue aspartate 411. Asparagine 432 is a glycosylation site (N-linked (GlcNAc...) (complex) asparagine). Tyrosine 445 is a Fe(3+) binding site. Positions 471, 475, 477, and 478 each coordinate hydrogencarbonate. Asparagine 491 carries an N-linked (GlcNAc...) asparagine; atypical; partial glycan. Tyrosine 536 is a binding site for Fe(3+). Histidine 604 lines the Fe(3+) pocket. N-linked (GlcNAc...) (complex) asparagine glycosylation occurs at asparagine 630. Serine 685 bears the Phosphoserine; by FAM20C mark.

This sequence belongs to the transferrin family. As to quaternary structure, monomer. Part of a complex composed of SLC40A1/ferroportin, TF/transferrin and HEPH/hephaestin that transfers iron from cells to transferrin. In terms of assembly, (Microbial infection) Binds to Neisseria transferrin-binding protein A (tbpA or tbp1). Forms a large complex with TbpA and TbpB. (Microbial infection) Binds to Neisseria transferrin-binding protein B (tbpb or tbp2). In terms of tissue distribution, expressed by the liver and secreted in plasma.

The protein localises to the secreted. Functionally, transferrins are iron binding transport proteins which can bind two Fe(3+) ions in association with the binding of an anion, usually bicarbonate. It is responsible for the transport of iron from sites of absorption and heme degradation to those of storage and utilization. Serum transferrin may also have a further role in stimulating cell proliferation. (Microbial infection) Serves as an iron source for Neisseria species, which capture the protein and extract its iron for their own use. In terms of biological role, (Microbial infection) Serves as an iron source for parasite T.brucei (strain 427), which capture TF via its own transferrin receptor ESAG6:ESAG7 and extract its iron for its own use. This Homo sapiens (Human) protein is Serotransferrin.